Here is a 448-residue protein sequence, read N- to C-terminus: Tapasin (448 aa).

The signal sequence occupies residues 1–20 (MKSLSLLLAVALGLATAVSA). Residues 21 to 414 (GPAVIECWFV…LSGPSLEDSV (394 aa)) are Lumenal-facing. Cysteines 27 and 91 form a disulfide. Asn-253 carries N-linked (GlcNAc...) asparagine glycosylation. One can recognise an Ig-like C1-type domain in the interval 292–399 (PKVSLMPATL…PASGRSAEVT (108 aa)). Residues Cys-315 and Cys-382 are joined by a disulfide bond. Residues 415-435 (GLFLSAFLLLGLFKALGWAAV) form a helical membrane-spanning segment. The Cytoplasmic segment spans residues 436-448 (YLSTCKDSKKKAE).

Heterodimer with PDIA3; disulfide-linked. Obligatory mediator for the interaction between newly assembled MHC class I molecules, calreticulin, PDIA3 and TAP. Up to 4 MHC class I/tapasin complexes bind to 1 TAP. Interacts with HLA-G-B2M complex; this interaction is required for loading of high affinity peptides. On its own or as part of MHC class I peptide loading complex, interacts with ligand-free MR1 or MR1-B2M complex, providing for stable MR1 pools ready for metabolite antigen processing. In terms of tissue distribution, neutrophils, mostly in fully differentiated cells.

The protein resides in the endoplasmic reticulum membrane. Involved in the association of MHC class I with transporter associated with antigen processing (TAP) and in the assembly of MHC class I with peptide (peptide loading). The sequence is that of Tapasin from Homo sapiens (Human).